Reading from the N-terminus, the 214-residue chain is Probable adenylyl-sulfate kinase (214 aa).

Glycine 13 to threonine 20 provides a ligand contact to ATP. The active-site Phosphoserine intermediate is serine 87. The disordered stretch occupies residues tryptophan 174 to alanine 199.

Belongs to the APS kinase family.

It carries out the reaction adenosine 5'-phosphosulfate + ATP = 3'-phosphoadenylyl sulfate + ADP + H(+). It participates in sulfur metabolism; hydrogen sulfide biosynthesis; sulfite from sulfate: step 2/3. Its function is as follows. Catalyzes the synthesis of activated sulfate. The protein is Probable adenylyl-sulfate kinase of Pseudomonas aeruginosa.